Consider the following 299-residue polypeptide: ATP synthase gamma chain (299 aa).

Belongs to the ATPase gamma chain family. In terms of assembly, F-type ATPases have 2 components, CF(1) - the catalytic core - and CF(0) - the membrane proton channel. CF(1) has five subunits: alpha(3), beta(3), gamma(1), delta(1), epsilon(1). CF(0) has three main subunits: a, b and c.

It is found in the cell membrane. Produces ATP from ADP in the presence of a proton gradient across the membrane. The gamma chain is believed to be important in regulating ATPase activity and the flow of protons through the CF(0) complex. The polypeptide is ATP synthase gamma chain (Levilactobacillus brevis (strain ATCC 367 / BCRC 12310 / CIP 105137 / JCM 1170 / LMG 11437 / NCIMB 947 / NCTC 947) (Lactobacillus brevis)).